The following is a 262-amino-acid chain: ATP synthase subunit a (262 aa).

Helical transmembrane passes span 50-70, 107-127, 141-161, 194-214, 218-238, and 239-259; these read TMIM…ACTK, MMPI…LGLI, FGLA…ANGV, LYGN…LINI, VFGG…VGFV, and QAFV…AHEA.

It belongs to the ATPase A chain family. F-type ATPases have 2 components, CF(1) - the catalytic core - and CF(0) - the membrane proton channel. CF(1) has five subunits: alpha(3), beta(3), gamma(1), delta(1), epsilon(1). CF(0) has three main subunits: a(1), b(2) and c(9-12). The alpha and beta chains form an alternating ring which encloses part of the gamma chain. CF(1) is attached to CF(0) by a central stalk formed by the gamma and epsilon chains, while a peripheral stalk is formed by the delta and b chains.

It localises to the cell membrane. Key component of the proton channel; it plays a direct role in the translocation of protons across the membrane. The polypeptide is ATP synthase subunit a (Desulforamulus reducens (strain ATCC BAA-1160 / DSM 100696 / MI-1) (Desulfotomaculum reducens)).